The sequence spans 858 residues: Cone cGMP-specific 3',5'-cyclic phosphodiesterase subunit alpha' (858 aa).

GAF domains lie at 75 to 224 (TPEQ…SIIL) and 256 to 433 (DVER…GWSL). Residues Ser-97, Asp-116, 169–172 (DKQT), and Thr-176 contribute to the 3',5'-cyclic GMP site. Positions 486-819 (EEKQLVAILK…VEWKSLADEY (334 aa)) constitute a PDEase domain. Catalysis depends on His-562, which acts as the Proton donor. His-566, His-602, Asp-603, and Asp-723 together coordinate a divalent metal cation. Basic and acidic residues predominate over residues 830–852 (AKKQEGGAEKAAEDSGGGDDKKS). Residues 830 to 858 (AKKQEGGAEKAAEDSGGGDDKKSKTCLML) form a disordered region. Cys-855 bears the Cysteine methyl ester mark. Cys-855 carries the S-geranylgeranyl cysteine lipid modification. The propeptide at 856–858 (LML) is removed in mature form.

This sequence belongs to the cyclic nucleotide phosphodiesterase family. Composed of two alpha' subunits that are associated with 3 smaller proteins of 11, 13, and 15 kDa. Requires a divalent metal cation as cofactor.

It localises to the cell membrane. The enzyme catalyses 3',5'-cyclic GMP + H2O = GMP + H(+). As cone-specific cGMP phosphodiesterase, it plays an essential role in light detection and cone phototransduction by rapidly decreasing intracellular levels of cGMP. This is Cone cGMP-specific 3',5'-cyclic phosphodiesterase subunit alpha' (PDE6C) from Homo sapiens (Human).